The primary structure comprises 209 residues: Lipopolysaccharide export system protein LptC (209 aa).

A helical membrane pass occupies residues 7 to 26 (NIRWNVILGVIALCALAWFY).

It belongs to the LptC family. Component of the lipopolysaccharide transport and assembly complex. Interacts with LptA and the LptBFG transporter complex.

It is found in the cell inner membrane. In terms of biological role, involved in the assembly of lipopolysaccharide (LPS). Required for the translocation of LPS from the inner membrane to the outer membrane. Facilitates the transfer of LPS from the inner membrane to the periplasmic protein LptA. Could be a docking site for LptA. The polypeptide is Lipopolysaccharide export system protein LptC (Haemophilus influenzae (strain ATCC 51907 / DSM 11121 / KW20 / Rd)).